A 432-amino-acid polypeptide reads, in one-letter code: ATP-dependent RNA helicase SUB2 (432 aa).

Over residues 1 to 17 (MSAEGQEELLDYSDSEE) the composition is skewed to acidic residues. The disordered stretch occupies residues 1–35 (MSAEGQEELLDYSDSEEIAVPSNAPEAGADGADKD). Residues 48–76 (TGFRDFLLKPELLRAIGDCGFEHPSEVQQ) carry the Q motif motif. The Helicase ATP-binding domain occupies 79–254 (IPQSILGTDV…KKFMQNPLEI (176 aa)). 92–99 (AKSGLGKT) contacts ATP. The DEAD box signature appears at 201–204 (DECD). The Helicase C-terminal domain maps to 266–427 (GLQQYYLKLD…EFPEEGVDSS (162 aa)).

Belongs to the DEAD box helicase family. DECD subfamily.

The protein localises to the nucleus. The enzyme catalyses ATP + H2O = ADP + phosphate + H(+). ATP-binding RNA helicase involved in transcription elongation and required for the export of mRNA out of the nucleus. SUB2 also plays a role in pre-mRNA splicing and spliceosome assembly. May be involved in rDNA and telomeric silencing, and maintenance of genome integrity. This is ATP-dependent RNA helicase SUB2 (SUB2) from Meyerozyma guilliermondii (strain ATCC 6260 / CBS 566 / DSM 6381 / JCM 1539 / NBRC 10279 / NRRL Y-324) (Yeast).